A 178-amino-acid chain; its full sequence is PRA1 family protein 2 (178 aa).

At 1–41 (MSEVRLPPLRALDDFVLGSARLAAPDPCDPQRWCHRVINNL) the chain is on the cytoplasmic side. Residues 42-62 (LYYQTNYLLCFGIGLALAGYV) form a helical membrane-spanning segment. At 63–64 (RP) the chain is on the extracellular side. The chain crosses the membrane as a helical span at residues 65 to 85 (LHTLLSALVVAVALGVLVWAA). Residues 86–96 (ETRAAVRRCRR) are Cytoplasmic-facing. A helical membrane pass occupies residues 97-119 (SHPAACLAAVLAVGLLVLWVAGG). Residues 120-122 (ACT) lie on the Extracellular side of the membrane. Residues 123–140 (FLFSIAGPVLLILVHASL) traverse the membrane as a helical segment. The Cytoplasmic portion of the chain corresponds to 141 to 178 (RLRNLKNKIENKIESIGLKRTPMGLLLEALGQEQEAGS).

Belongs to the PRA1 family. As to quaternary structure, interacts with CCR5 and GDE1. In terms of tissue distribution, strong expression in the brain, small intestine, lung, spleen, and pancreas as well as in tumor tissues of the breast, colon, lung and ovary, with a weaker expression in normal tissues of the same patient. High expression in neuroblastic tumors. Strongly expressed in Purkinje cells and more moderately in cells of the molecular and the granular layers in the cerebellum. Detected in neuronal cells, but not in non-neuronal cells in the cerebral cortex, hippocampus, and lateral ventricles.

It is found in the endosome membrane. May be involved in ER/Golgi transport and vesicular traffic. Plays a proapoptotic role in cerulenin-induced neuroblastoma apoptosis. This is PRA1 family protein 2 (PRAF2) from Homo sapiens (Human).